A 78-amino-acid polypeptide reads, in one-letter code: Exodeoxyribonuclease 7 small subunit (78 aa).

The protein belongs to the XseB family. Heterooligomer composed of large and small subunits.

It is found in the cytoplasm. It catalyses the reaction Exonucleolytic cleavage in either 5'- to 3'- or 3'- to 5'-direction to yield nucleoside 5'-phosphates.. Bidirectionally degrades single-stranded DNA into large acid-insoluble oligonucleotides, which are then degraded further into small acid-soluble oligonucleotides. The chain is Exodeoxyribonuclease 7 small subunit from Synechococcus sp. (strain JA-3-3Ab) (Cyanobacteria bacterium Yellowstone A-Prime).